The sequence spans 266 residues: Hydroxyethylthiazole kinase (266 aa).

Met44 lines the substrate pocket. Positions 120 and 166 each coordinate ATP. Gly193 serves as a coordination point for substrate.

This sequence belongs to the Thz kinase family. Mg(2+) is required as a cofactor.

It catalyses the reaction 5-(2-hydroxyethyl)-4-methylthiazole + ATP = 4-methyl-5-(2-phosphooxyethyl)-thiazole + ADP + H(+). It participates in cofactor biosynthesis; thiamine diphosphate biosynthesis; 4-methyl-5-(2-phosphoethyl)-thiazole from 5-(2-hydroxyethyl)-4-methylthiazole: step 1/1. In terms of biological role, catalyzes the phosphorylation of the hydroxyl group of 4-methyl-5-beta-hydroxyethylthiazole (THZ). The sequence is that of Hydroxyethylthiazole kinase from Syntrophomonas wolfei subsp. wolfei (strain DSM 2245B / Goettingen).